The sequence spans 288 residues: Bifunctional protein FolD (288 aa).

NADP(+) is bound by residues 166–168 (GRS), Ser-191, and Ile-232.

The protein belongs to the tetrahydrofolate dehydrogenase/cyclohydrolase family. Homodimer.

The enzyme catalyses (6R)-5,10-methylene-5,6,7,8-tetrahydrofolate + NADP(+) = (6R)-5,10-methenyltetrahydrofolate + NADPH. The catalysed reaction is (6R)-5,10-methenyltetrahydrofolate + H2O = (6R)-10-formyltetrahydrofolate + H(+). Its pathway is one-carbon metabolism; tetrahydrofolate interconversion. Catalyzes the oxidation of 5,10-methylenetetrahydrofolate to 5,10-methenyltetrahydrofolate and then the hydrolysis of 5,10-methenyltetrahydrofolate to 10-formyltetrahydrofolate. This Rickettsia africae (strain ESF-5) protein is Bifunctional protein FolD.